The primary structure comprises 44 residues: MVNNTSNQPTSYPIFTVRWLAVHTLAVPTVFFVGAIAAMQFIQR.

The helical transmembrane segment at 19–35 threads the bilayer; sequence WLAVHTLAVPTVFFVGA. Heme is bound at residue His-23.

Belongs to the PsbE/PsbF family. As to quaternary structure, heterodimer of an alpha subunit and a beta subunit. PSII is composed of 1 copy each of membrane proteins PsbA, PsbB, PsbC, PsbD, PsbE, PsbF, PsbH, PsbI, PsbJ, PsbK, PsbL, PsbM, PsbT, PsbX, PsbY, PsbZ, Psb30/Ycf12, peripheral proteins PsbO, CyanoQ (PsbQ), PsbU, PsbV and a large number of cofactors. It forms dimeric complexes. Heme b serves as cofactor.

Its subcellular location is the cellular thylakoid membrane. Functionally, this b-type cytochrome is tightly associated with the reaction center of photosystem II (PSII). PSII is a light-driven water:plastoquinone oxidoreductase that uses light energy to abstract electrons from H(2)O, generating O(2) and a proton gradient subsequently used for ATP formation. It consists of a core antenna complex that captures photons, and an electron transfer chain that converts photonic excitation into a charge separation. In Crocosphaera subtropica (strain ATCC 51142 / BH68) (Cyanothece sp. (strain ATCC 51142)), this protein is Cytochrome b559 subunit beta.